Reading from the N-terminus, the 189-residue chain is Potassium-transporting ATPase KdpC subunit (189 aa).

Residues 6–26 traverse the membrane as a helical segment; the sequence is PAIMMVLVFTIICGGIYPAVV.

The protein belongs to the KdpC family. The system is composed of three essential subunits: KdpA, KdpB and KdpC.

It is found in the cell inner membrane. Functionally, part of the high-affinity ATP-driven potassium transport (or Kdp) system, which catalyzes the hydrolysis of ATP coupled with the electrogenic transport of potassium into the cytoplasm. This subunit acts as a catalytic chaperone that increases the ATP-binding affinity of the ATP-hydrolyzing subunit KdpB by the formation of a transient KdpB/KdpC/ATP ternary complex. In Geobacter metallireducens (strain ATCC 53774 / DSM 7210 / GS-15), this protein is Potassium-transporting ATPase KdpC subunit.